Reading from the N-terminus, the 367-residue chain is Serine/threonine-protein kinase-transforming protein Rmil (367 aa).

A disordered region spans residues 1–64 (EGGSTAGLSA…DSSDDWEIPD (64 aa)). Residues 33 to 57 (QRERKSSSSSEDRNRMKTLGRRDSS) show a composition bias toward basic and acidic residues. The 261-residue stretch at 67–327 (ITVGQRIGSG…PQILASIELL (261 aa)) folds into the Protein kinase domain. Residues 73–81 (IGSGSFGTV) and Lys93 contribute to the ATP site. Asp186 functions as the Proton acceptor in the catalytic mechanism.

It belongs to the protein kinase superfamily. TKL Ser/Thr protein kinase family. RAF subfamily.

The enzyme catalyses L-seryl-[protein] + ATP = O-phospho-L-seryl-[protein] + ADP + H(+). The catalysed reaction is L-threonyl-[protein] + ATP = O-phospho-L-threonyl-[protein] + ADP + H(+). The chain is Serine/threonine-protein kinase-transforming protein Rmil (V-RMIL) from Avian retrovirus IC10.